The sequence spans 442 residues: Radical S-adenosyl methionine domain-containing protein 1, mitochondrial (442 aa).

The N-terminal 17 residues, 1-17 (MVPSGVRTGRWVAAARA), are a transit peptide targeting the mitochondrion. The Radical SAM core domain occupies 34–270 (ESASTRAALY…RTVLRDAGFR (237 aa)). Tyrosine 43 provides a ligand contact to S-adenosyl-L-methionine. Residues cysteine 49, cysteine 53, and cysteine 56 each contribute to the [4Fe-4S] cluster site. Residues glycine 98, 99–100 (GT), glutamate 131, glutamine 158, arginine 170, and aspartate 195 contribute to the S-adenosyl-L-methionine site.

The protein belongs to the anaerobic coproporphyrinogen-III oxidase family. HemW subfamily. [4Fe-4S] cluster serves as cofactor.

The protein resides in the mitochondrion. May be a heme chaperone, appears to bind heme. Homologous bacterial proteins do not have oxygen-independent coproporphyrinogen-III oxidase activity. Binds 1 [4Fe-4S] cluster. The cluster is coordinated with 3 cysteines and an exchangeable S-adenosyl-L-methionine. This Mus musculus (Mouse) protein is Radical S-adenosyl methionine domain-containing protein 1, mitochondrial (Rsad1).